Here is a 125-residue protein sequence, read N- to C-terminus: PEP-dependent dihydroxyacetone kinase 2, phosphoryl donor subunit DhaM (125 aa).

One can recognise a PTS EIIA type-4 domain in the interval 1-125; that stretch reads MISIVLVSHS…AILQELTNVH (125 aa). Catalysis depends on His-9, which acts as the Tele-phosphohistidine intermediate.

Belongs to the PEP-utilizing enzyme family. In terms of assembly, homodimer. The dihydroxyacetone kinase complex is composed of a homodimer of DhaM, a homodimer of DhaK and the subunit DhaL.

It localises to the cytoplasm. It catalyses the reaction dihydroxyacetone + phosphoenolpyruvate = dihydroxyacetone phosphate + pyruvate. Component of the dihydroxyacetone kinase complex, which is responsible for the phosphoenolpyruvate (PEP)-dependent phosphorylation of dihydroxyacetone. DhaM serves as the phosphoryl donor. Is phosphorylated by phosphoenolpyruvate in an EI- and HPr-dependent reaction, and a phosphorelay system on histidine residues finally leads to phosphoryl transfer to DhaL and dihydroxyacetone. This chain is PEP-dependent dihydroxyacetone kinase 2, phosphoryl donor subunit DhaM, found in Listeria innocua serovar 6a (strain ATCC BAA-680 / CLIP 11262).